A 1006-amino-acid polypeptide reads, in one-letter code: MSNKEKGVNVQVLLRCRPFSNDELRNNAPQVVTCNDYQREVAVSQNIAGKHIDRIFTFDKVFGPSAQQRDLYDQAIVPIVNEVLEGFNCTIFAYGQTGTGKTYTMEGECKRSKSGPNGELPQEAGVIPRAVKQVFDTLESQNAEYSVKVTFLELYNEEITDLLAPEDLKVALEDRQKKQLPLMEDGKGGVLVRGLEEEIVTSANEIFTLLERGSAKRRTAETLLNKQSSRSHSLFSITIHIKEATPEGEELIKCGKLNLVDLAGSENISRSGAREGRAREAGEINKSLLTLGRVINALVEHLGHIPYRDSKLTRLLRDSLGGRTKTCIIATVSPAVHCLEETLSTLDYAHRAKNIKNKPEVNQKMMKSTLIKDLYGEIERLKAEVYAAREKNGVYIPKERYYQEENERKAMADQIEQMGVSIENHQKQFEELQSRHDSQVQQCSDLTCKLDVTQKQLNQTSKLLAYTEEQLRQSQYTLKERDFIISEQKKAENALAHQACVLRADLEKSIQENASLFQKIAREDKLSTDNRSLVNNFQAELAKQLGSLSSTLATSVCRQTEHLQCVEKFCHNFLDSHDKAVLDLKRKINSSMALYISHFEAMQNVVRLHKATSNATLEEVSTLASSNSISTKEFLDAEAVEANSMFDELQSTLSTHQGEMAHFARELRQRFNDSTEHLTNISAIIQRFFDKLLDESKRLEKHATTVDEIQTNSIAEFEKAYEEQSKSDAEKLIADVTSLVSNHMRRQKELVGARLVDLRETVSGNRTFLDGHVSSMEGITTDAKRKWQDFYMQAEGETKENADFSAAKHCRMESLMQKCVSTAETALKRWQSTHELVNDMGNQHVLTMHSVVRNICDNNEQHVTDFDSTRESAEEDVKRNSEDIIKSIDSLSGEERGSISGVLDTTSAHSETLDVLKKDHCMQSTSIEQIALETFQQKYMDYEPTGATPIRSEPDVPSKVTIESLRAMPMEVLLEEFRENNSFESFQVKEVKPSLIPRSPFSQINN.

Residues 9-355 (NVQVLLRCRP…LDYAHRAKNI (347 aa)) enclose the Kinesin motor domain. 95–102 (GQTGTGKT) is an ATP binding site. The stretch at 371–522 (IKDLYGEIER…NASLFQKIAR (152 aa)) forms a coiled coil.

Belongs to the TRAFAC class myosin-kinesin ATPase superfamily. Kinesin family. KIN-5/BimC subfamily.

It is found in the cytoplasm. The protein resides in the cytoskeleton. The protein localises to the spindle. Responsible for microtubule translocation. May be important for the organization of phragmoplast-specific arrays of microtubules. Plays an essential role in stabilizing the mitotic spindle. Required during mitotic cytokinesis. The protein is Kinesin-like protein KIN-5C of Nicotiana tabacum (Common tobacco).